We begin with the raw amino-acid sequence, 360 residues long: NAD(P)H-quinone oxidoreductase subunit 1, chloroplastic (360 aa).

The next 8 membrane-spanning stretches (helical) occupy residues 27–47 (IWIF…VLVI), 98–118 (FSIG…VIPF), 129–149 (IGIF…LMSG), 165–185 (AAQS…ISLL), 203–223 (FWGW…ISSL), 253–273 (FGLF…FVTV), 297–317 (IFGT…FLFV), and 340–360 (FLLP…LFSL).

The protein belongs to the complex I subunit 1 family. As to quaternary structure, NDH is composed of at least 16 different subunits, 5 of which are encoded in the nucleus.

It is found in the plastid. The protein localises to the chloroplast thylakoid membrane. The enzyme catalyses a plastoquinone + NADH + (n+1) H(+)(in) = a plastoquinol + NAD(+) + n H(+)(out). The catalysed reaction is a plastoquinone + NADPH + (n+1) H(+)(in) = a plastoquinol + NADP(+) + n H(+)(out). In terms of biological role, NDH shuttles electrons from NAD(P)H:plastoquinone, via FMN and iron-sulfur (Fe-S) centers, to quinones in the photosynthetic chain and possibly in a chloroplast respiratory chain. The immediate electron acceptor for the enzyme in this species is believed to be plastoquinone. Couples the redox reaction to proton translocation, and thus conserves the redox energy in a proton gradient. This chain is NAD(P)H-quinone oxidoreductase subunit 1, chloroplastic, found in Arabidopsis thaliana (Mouse-ear cress).